Reading from the N-terminus, the 222-residue chain is N-(5'-phosphoribosyl)anthranilate isomerase (222 aa).

This sequence belongs to the TrpF family.

It catalyses the reaction N-(5-phospho-beta-D-ribosyl)anthranilate = 1-(2-carboxyphenylamino)-1-deoxy-D-ribulose 5-phosphate. Its pathway is amino-acid biosynthesis; L-tryptophan biosynthesis; L-tryptophan from chorismate: step 3/5. The polypeptide is N-(5'-phosphoribosyl)anthranilate isomerase (Rhizobium etli (strain ATCC 51251 / DSM 11541 / JCM 21823 / NBRC 15573 / CFN 42)).